A 347-amino-acid polypeptide reads, in one-letter code: Tryptophan--tRNA ligase (347 aa).

Residues 10–12 (QAS) and 18–19 (GN) each bind ATP. The 'HIGH' region signature appears at 11–19 (ASGRQHLGN). Asp-140 lines the L-tryptophan pocket. ATP contacts are provided by residues 152–154 (GND), Ile-191, and 200–204 (KMSKS). Residues 200-204 (KMSKS) carry the 'KMSKS' region motif.

It belongs to the class-I aminoacyl-tRNA synthetase family. In terms of assembly, homodimer.

The protein resides in the cytoplasm. The enzyme catalyses tRNA(Trp) + L-tryptophan + ATP = L-tryptophyl-tRNA(Trp) + AMP + diphosphate + H(+). In terms of biological role, catalyzes the attachment of tryptophan to tRNA(Trp). The polypeptide is Tryptophan--tRNA ligase (Mycoplasma genitalium (strain ATCC 33530 / DSM 19775 / NCTC 10195 / G37) (Mycoplasmoides genitalium)).